The sequence spans 201 residues: Small ribosomal subunit protein uS4c (201 aa).

Residues 20 to 39 (GLTRKTPKSGSNLKKKFHSG) form a disordered region. The 62-residue stretch at 89 to 150 (MRLDNILFRL…NQRSKRLVQN (62 aa)) folds into the S4 RNA-binding domain.

This sequence belongs to the universal ribosomal protein uS4 family. In terms of assembly, part of the 30S ribosomal subunit. Contacts protein S5. The interaction surface between S4 and S5 is involved in control of translational fidelity.

It is found in the plastid. Its subcellular location is the chloroplast. Its function is as follows. One of the primary rRNA binding proteins, it binds directly to 16S rRNA where it nucleates assembly of the body of the 30S subunit. With S5 and S12 plays an important role in translational accuracy. The polypeptide is Small ribosomal subunit protein uS4c (rps4) (Oryza nivara (Indian wild rice)).